A 337-amino-acid polypeptide reads, in one-letter code: MATMARSFLQAISKDEAVAPPLRVVQIEGLAVLKIIKHCKEFSPTLVTGQLLGLDVGSVLEVTNCFPFPVRDDDEEIEADGANYQLEMMRCLREVNVDNNTVGWYQSTVLGSYQTVELIETFMNYQENIKRCVCIIYDPSKADLGVLALKALKLSDSFMELYRGGNFTGEKLREKNFSWMDIFEEIPIKVSNSALVSAFMTELETDTPVSQGDYDRLHSSTTPFLENNMEFLIKCMDDLSMEQQKFQYYYRNLSRQQAQQQAWLQKRRTENMARKSAGEEPLPEEDPSNPIFKAIPEPSRLESFLITNQVSNFCGQINGVAGQNFSRLYLTKALHDN.

The MPN domain occupies Val25–Phe158. Ser178 carries the phosphoserine; by ATPK1 modification. Residues Arg267–Gly278 are compositionally biased toward basic and acidic residues. The segment at Arg267 to Pro290 is disordered.

It belongs to the eIF-3 subunit H family. In terms of assembly, component of the eukaryotic translation initiation factor 3 (eIF-3) complex. Interacts directly with TIF3A1, TIF3B1, TIF3C1, TIF3E1 and TIF3F1. Associates with the CSN (COP9 signalosome) complex. Binds to CSN1, CSN7 and CSN8. Interacts with ATPK1. In response to auxin (NAA), phosphorylated at Ser-178 by ATPK1 and binds to polysomes via TOR signaling. This phosphorylation is repressed by Torin-1. As to expression, mostly expressed in roots and flowers, and, to a lower extent, in leaves, stems and siliques.

The protein localises to the cytoplasm. In terms of biological role, component of the eukaryotic translation initiation factor 3 (eIF-3) complex, which is involved in protein synthesis of a specialized repertoire of mRNAs and, together with other initiation factors, stimulates binding of mRNA and methionyl-tRNAi to the 40S ribosome. The eIF-3 complex specifically targets and initiates translation of a subset of mRNAs involved in cell proliferation (Potential). Regulates translation initiation of specific 5' mRNAs harboring multiple upstream open reading frames (uORFs) in their 5' leader sequence (e.g. BETA-OHASE 2 and LHY). The polypeptide is Eukaryotic translation initiation factor 3 subunit H (TIF3H1) (Arabidopsis thaliana (Mouse-ear cress)).